The following is a 159-amino-acid chain: Protein NrdI (159 aa).

It belongs to the NrdI family.

Functionally, probably involved in ribonucleotide reductase function. The protein is Protein NrdI of Rhodococcus erythropolis (strain PR4 / NBRC 100887).